The chain runs to 428 residues: C4-dicarboxylate transport protein (428 aa).

The next 8 membrane-spanning stretches (helical) occupy residues 8–28 (SLYF…HFYP), 44–64 (LIKM…IAGM), 76–96 (VALL…LIIV), 142–162 (IGAF…LFGF), 184–204 (VIFG…FGAM), 222–242 (LIIC…GSIA), 326–346 (IVHQ…AAGV), and 352–372 (IVLA…LALI).

The protein belongs to the dicarboxylate/amino acid:cation symporter (DAACS) (TC 2.A.23) family.

Its subcellular location is the cell inner membrane. Functionally, responsible for the transport of dicarboxylates such as succinate, fumarate, and malate from the periplasm across the membrane. This is C4-dicarboxylate transport protein from Escherichia coli O139:H28 (strain E24377A / ETEC).